Consider the following 167-residue polypeptide: Nascent polypeptide-associated complex subunit beta (167 aa).

Disordered stretches follow at residues 1–48 and 133–167; these read MDQA…GADD and QNMQKNQAGAEGKKDDEEDDIPDLVEGQDFESKVE. Positions 25 to 42 are enriched in basic residues; the sequence is NRNRGKGTPRRKVKKVHK. The 66-residue stretch at 45 to 110 folds into the NAC-A/B domain; it reads GADDKKLQAT…GEEKELTELV (66 aa). The segment covering 148–161 has biased composition (acidic residues); sequence DEEDDIPDLVEGQD.

The protein belongs to the NAC-beta family. In terms of assembly, part of the nascent polypeptide-associated complex (NAC), consisting of egd2 and egd1. NAC associates with ribosomes via egd1.

It is found in the cytoplasm. The protein localises to the nucleus. Its function is as follows. Component of the nascent polypeptide-associated complex (NAC), a dynamic component of the ribosomal exit tunnel, protecting the emerging polypeptides from interaction with other cytoplasmic proteins to ensure appropriate nascent protein targeting. The NAC complex also promotes mitochondrial protein import by enhancing productive ribosome interactions with the outer mitochondrial membrane and blocks the inappropriate interaction of ribosomes translating non-secretory nascent polypeptides with translocation sites in the membrane of the endoplasmic reticulum. EGD1 may act as a transcription factor that exert a negative effect on the expression of several genes that are transcribed by RNA polymerase II. The sequence is that of Nascent polypeptide-associated complex subunit beta (egd1) from Aspergillus terreus (strain NIH 2624 / FGSC A1156).